The following is a 328-amino-acid chain: Ribosomal protein L11 methyltransferase (328 aa).

S-adenosyl-L-methionine is bound by residues T158, G180, D202, and N246.

The protein belongs to the methyltransferase superfamily. PrmA family.

The protein resides in the cytoplasm. The catalysed reaction is L-lysyl-[protein] + 3 S-adenosyl-L-methionine = N(6),N(6),N(6)-trimethyl-L-lysyl-[protein] + 3 S-adenosyl-L-homocysteine + 3 H(+). Functionally, methylates ribosomal protein L11. The protein is Ribosomal protein L11 methyltransferase of Polynucleobacter necessarius subsp. necessarius (strain STIR1).